The following is a 414-amino-acid chain: Inositol-tetrakisphosphate 1-kinase (414 aa).

Lysine 18 contacts 1D-myo-inositol 1,3,4-trisphosphate. Positions 106 and 157 each coordinate ATP. Residues 117 to 325 enclose the ATP-grasp domain; that stretch reads EAYMEDDRIC…IATVLQGQST (209 aa). Positions 167 and 199 each coordinate 1D-myo-inositol 1,3,4-trisphosphate. ATP-binding positions include 188-199, serine 214, serine 232, and serine 236; that span reads QNFINHNAVLYK. Mg(2+) is bound by residues aspartate 281, aspartate 295, and asparagine 297. Asparagine 297 is a 1D-myo-inositol 1,3,4-trisphosphate binding site. 2 positions are modified to N6-acetyllysine; by EP300 and CREBBP: lysine 340 and lysine 383. Serine 396 carries the phosphoserine modification. At lysine 410 the chain carries N6-acetyllysine; by EP300 and CREBBP.

It belongs to the ITPK1 family. Monomer. Interacts with GPS1/COPS1. It depends on Mg(2+) as a cofactor. Acetylation by EP300 and CREBBP destabilizes ITPK1, and down-regulates enzymatic activity. Deacetylated by SIRT1. In terms of tissue distribution, expressed in brain &gt; heart &gt; skeletal muscle = kidney = pancreas = liver = placenta &gt; lung. In brain, it is expressed in cerebellum, cerebral cortex, medulla, spinal cord, occipital lobe, frontal lobe, temporal lobe and putamen.

The catalysed reaction is 1D-myo-inositol 3,4,5,6-tetrakisphosphate + ATP = 1D-myo-inositol 1,3,4,5,6-pentakisphosphate + ADP + H(+). It catalyses the reaction 1D-myo-inositol 1,3,4-trisphosphate + ATP = 1D-myo-inositol 1,3,4,5-tetrakisphosphate + ADP + H(+). It carries out the reaction 1D-myo-inositol 1,3,4-trisphosphate + ATP = 1D-myo-inositol 1,3,4,6-tetrakisphosphate + ADP + H(+). The enzyme catalyses 1D-myo-inositol 3,4,6-trisphosphate + ATP = 1D-myo-inositol 1,3,4,6-tetrakisphosphate + ADP + H(+). The catalysed reaction is 1D-myo-inositol 1,3,4-trisphosphate + 1D-myo-inositol 1,3,4,5,6-pentakisphosphate = 1D-myo-inositol 3,4,5,6-tetrakisphosphate + 1D-myo-inositol 1,3,4,6-tetrakisphosphate. It catalyses the reaction 1D-myo-inositol 1,3,4-trisphosphate + 1D-myo-inositol 1,3,4,5,6-pentakisphosphate = 1D-myo-inositol 3,4,5,6-tetrakisphosphate + 1D-myo-inositol 1,3,4,5-tetrakisphosphate. Kinase that can phosphorylate various inositol polyphosphate such as Ins(3,4,5,6)P4 or Ins(1,3,4)P3. Phosphorylates Ins(3,4,5,6)P4 at position 1 to form Ins(1,3,4,5,6)P5. This reaction is thought to have regulatory importance, since Ins(3,4,5,6)P4 is an inhibitor of plasma membrane Ca(2+)-activated Cl(-) channels, while Ins(1,3,4,5,6)P5 is not. Also phosphorylates Ins(1,3,4)P3 on O-5 and O-6 to form Ins(1,3,4,6)P4, an essential molecule in the hexakisphosphate (InsP6) pathway. Also acts as an inositol polyphosphate phosphatase that dephosphorylates Ins(1,3,4,5)P4 and Ins(1,3,4,6)P4 to Ins(1,3,4)P3, and Ins(1,3,4,5,6)P5 to Ins(3,4,5,6)P4. May also act as an isomerase that interconverts the inositol tetrakisphosphate isomers Ins(1,3,4,5)P4 and Ins(1,3,4,6)P4 in the presence of ADP and magnesium. Probably acts as the rate-limiting enzyme of the InsP6 pathway. Modifies TNF-alpha-induced apoptosis by interfering with the activation of TNFRSF1A-associated death domain. Plays an important role in MLKL-mediated necroptosis. Produces highly phosphorylated inositol phosphates such as inositolhexakisphosphate (InsP6) which bind to MLKL mediating the release of an N-terminal auto-inhibitory region leading to its activation. Essential for activated phospho-MLKL to oligomerize and localize to the cell membrane during necroptosis. In Homo sapiens (Human), this protein is Inositol-tetrakisphosphate 1-kinase.